The sequence spans 277 residues: Energy-coupling factor transporter ATP-binding protein EcfA1 (277 aa).

An ABC transporter domain is found at 5-242 (VKVNNISFEY…IKMLKEIGLD (238 aa)). 41 to 48 (GHNGSGKS) is an ATP binding site.

It belongs to the ABC transporter superfamily. Energy-coupling factor EcfA family. Forms a stable energy-coupling factor (ECF) transporter complex composed of 2 membrane-embedded substrate-binding proteins (S component), 2 ATP-binding proteins (A component) and 2 transmembrane proteins (T component).

Its subcellular location is the cell membrane. ATP-binding (A) component of a common energy-coupling factor (ECF) ABC-transporter complex. Unlike classic ABC transporters this ECF transporter provides the energy necessary to transport a number of different substrates. This is Energy-coupling factor transporter ATP-binding protein EcfA1 from Clostridioides difficile (strain 630) (Peptoclostridium difficile).